A 493-amino-acid chain; its full sequence is Rop guanine nucleotide exchange factor 10 (493 aa).

Disordered regions lie at residues 1-45 and 400-423; these read MFDG…RSDM and GEAETRSESEAESEYEETEKVVAA. Residues 17–27 show a composition bias toward basic and acidic residues; sequence DGMHTPEHELA. In terms of domain architecture, PRONE spans 35–401; it reads RRGKQNRRSD…RLVQRQLMGE (367 aa).

In terms of biological role, guanine-nucleotide exchange factor (GEF) that acts as an activator of Rop (Rho of plants) GTPases by promoting the exchange of GDP for GTP. This is Rop guanine nucleotide exchange factor 10 (ROPGEF10) from Arabidopsis thaliana (Mouse-ear cress).